The primary structure comprises 260 residues: Type II methyltransferase M1.MboII (260 aa).

S-adenosyl-L-methionine is bound by residues Cys12, Asp30, Lys197, 223–225 (SGT), and 241–242 (DM).

This sequence belongs to the N(4)/N(6)-methyltransferase family. At low concentration exists as a monomer and homodimer. Probably binds to DNA as a monomer.

The enzyme catalyses a 2'-deoxyadenosine in DNA + S-adenosyl-L-methionine = an N(6)-methyl-2'-deoxyadenosine in DNA + S-adenosyl-L-homocysteine + H(+). Functionally, a beta subtype methylase that recognizes the double-stranded sequence 5'-GAAGA-3', methylates A-5 on the top strand, and protects the DNA from cleavage by the MboII endonuclease. It is not known if the cytosine of the complementary sequence TCTTC is also methylated by this enzyme. In Moraxella bovis, this protein is Type II methyltransferase M1.MboII.